The chain runs to 114 residues: Nucleoid-associated protein CKL_3826 (114 aa).

This sequence belongs to the YbaB/EbfC family. As to quaternary structure, homodimer.

It localises to the cytoplasm. The protein localises to the nucleoid. Its function is as follows. Binds to DNA and alters its conformation. May be involved in regulation of gene expression, nucleoid organization and DNA protection. This chain is Nucleoid-associated protein CKL_3826, found in Clostridium kluyveri (strain ATCC 8527 / DSM 555 / NBRC 12016 / NCIMB 10680 / K1).